Here is a 172-residue protein sequence, read N- to C-terminus: Interferon tau-3 (172 aa).

2 disulfide bridges follow: C1-C99 and C29-C139.

This sequence belongs to the alpha/beta interferon family. IFN-alphaII subfamily. Constitutively and exclusively expressed in the mononuclear cells of the extraembryonic trophectoderm.

The protein resides in the secreted. Its function is as follows. Paracrine hormone primarily responsible for maternal recognition of pregnancy. Interacts with endometrial receptors, probably type I interferon receptors, and blocks estrogen receptor expression, preventing the estrogen-induced increase in oxytocin receptor expression in the endometrium. This results in the suppression of the pulsatile endometrial release of the luteolytic hormone prostaglandin F2-alpha, hindering the regression of the corpus luteum (luteolysis) and therefore a return to ovarian cyclicity. This, and a possible direct effect of IFN-tau on prostaglandin synthesis, leads in turn to continued ovarian progesterone secretion, which stimulates the secretion by the endometrium of the nutrients required for the growth of the conceptus. In summary, displays particularly high antiviral and antiproliferative potency concurrently with particular weak cytotoxicity, high antiluteolytic activity and immunomodulatory properties. In contrast with other IFNs, IFN-tau is not virally inducible. The chain is Interferon tau-3 (IFNT3) from Ovis aries (Sheep).